The sequence spans 292 residues: 2-(5''-triphosphoribosyl)-3'-dephosphocoenzyme-A synthase (292 aa).

The protein belongs to the CitG/MdcB family.

It carries out the reaction 3'-dephospho-CoA + ATP = 2'-(5''-triphospho-alpha-D-ribosyl)-3'-dephospho-CoA + adenine. In terms of biological role, catalyzes the formation of 2-(5''-triphosphoribosyl)-3'-dephosphocoenzyme-A, the precursor of the prosthetic group of the holo-acyl carrier protein (gamma chain) of citrate lyase, from ATP and dephospho-CoA. The chain is 2-(5''-triphosphoribosyl)-3'-dephosphocoenzyme-A synthase from Escherichia coli (strain ATCC 8739 / DSM 1576 / NBRC 3972 / NCIMB 8545 / WDCM 00012 / Crooks).